Reading from the N-terminus, the 177-residue chain is Anditomin synthesis protein L (177 aa).

2 helical membrane passes run 54–74 and 117–137; these read VVNS…PFIM and IVNF…YMVF. Asparagine 165 is a glycosylation site (N-linked (GlcNAc...) asparagine).

Its subcellular location is the membrane. It functions in the pathway secondary metabolite biosynthesis; terpenoid biosynthesis. Its function is as follows. Part of the gene cluster that mediates the biosynthesis of anditomin, a fungal meroterpenoid. The first step of the pathway is the synthesis of 3,5-dimethylorsellinic acid (DMOA) by the polyketide synthase andM. DMOA is then converted to the phthalide compound 5,7-dihydroxy-4,6-dimethylphthalide (DHDMP) by the cytochrome P450 monooxygenase andK, which is further prenylated by the prenyltransferase andD to yield farnesyl-DHDMP. Further epoxidation by the FAD-dependent monooxygenase andE leads to epoxyfarnesyl-DHDMP. The next step involves the terpene cyclase andB that converts epoxyfarnesyl-DHDMP into preandiloid A through opening of the epoxide ring followed by the cyclization of the farnesyl moiety. Preandiloid A is in turn oxidized at the C-3 hydroxyl group to yield preandiloid B by the dehydrogenase andC. The dioxygenase andA is solely responsible for the dehydrogenation of preandiloid B leading to the enone preandiloid C, as well as for the intriguing structural rearrangement to generate the bicyclo[2.2.2]octane core, transforming preandiloid C into andiconin. FAD-binding monooxygenase andJ then produces andilesin D which is reduced by dehydrogenase andI to yield andilesin A. Action of acetyltransferase andG followed by a spontaneous acetate elimination leads then to andilesin B, which is in turn substrate of the short chain dehydrogenase andH to yield andilesin C. Finally, the dioxygenase andF catalyzes the transformation of andilesin C to anditomin. The exact role of andL within the anditomin biosynthetic pathway has not been identified yet. The protein is Anditomin synthesis protein L of Emericella variicolor (Aspergillus stellatus).